A 420-amino-acid polypeptide reads, in one-letter code: Pyridinium-3,5-bisthiocarboxylic acid mononucleotide nickel insertion protein (420 aa).

The segment at 81–104 (NHEHKHNHHEIKNDEPAHSHEHHH) is disordered. Basic and acidic residues predominate over residues 90–99 (EIKNDEPAHS).

It belongs to the LarC family.

It catalyses the reaction Ni(II)-pyridinium-3,5-bisthiocarboxylate mononucleotide = pyridinium-3,5-bisthiocarboxylate mononucleotide + Ni(2+). Functionally, involved in the biosynthesis of a nickel-pincer cofactor ((SCS)Ni(II) pincer complex). Binds Ni(2+), and functions in nickel delivery to pyridinium-3,5-bisthiocarboxylic acid mononucleotide (P2TMN), to form the mature cofactor. Is thus probably required for the activation of nickel-pincer cofactor-dependent enzymes. This chain is Pyridinium-3,5-bisthiocarboxylic acid mononucleotide nickel insertion protein, found in Clostridium acetobutylicum (strain ATCC 824 / DSM 792 / JCM 1419 / IAM 19013 / LMG 5710 / NBRC 13948 / NRRL B-527 / VKM B-1787 / 2291 / W).